Reading from the N-terminus, the 144-residue chain is Leghemoglobin-1 (144 aa).

One can recognise a Globin domain in the interval 2–144 (GFTEKQEALV…DGLATAIKAA (143 aa)). Tyr25 and Tyr30 each carry nitrated tyrosine. Residue Ser45 coordinates heme b. A Phosphoserine modification is found at Ser45. O2 is bound at residue His62. Residues Lys65, His93, and Lys96 each contribute to the heme b site. Tyr134 carries the nitrated tyrosine modification.

The protein belongs to the plant globin family. In terms of assembly, monomer. In terms of processing, nitrated in effective nodules and particularly in hypoxic conditions; this mechanism may play a protective role in the symbiosis by buffering toxic peroxynitrite NO(2)(-). Nitration level decrease during nodule senescence. Phosphorylation at Ser-45 disrupts the molecular environment of its porphyrin ring oxygen binding pocket, thus leading to a reduced oxygen consumption and to the delivery of oxygen O(2) to symbiosomes. Root nodules.

It localises to the cytoplasm. The protein resides in the cytosol. The protein localises to the nucleus. Leghemoglobin that reversibly binds oxygen O(2) through a pentacoordinated heme iron. In root nodules, facilitates the diffusion of oxygen to the bacteroids while preventing the bacterial nitrogenase from being inactivated by buffering dioxygen, nitric oxide and carbon monoxide, and promoting the formation of reactive oxygen species (ROS, e.g. H(2)O(2)). This role is essential for symbiotic nitrogen fixation (SNF). The sequence is that of Leghemoglobin-1 from Vicia faba (Broad bean).